We begin with the raw amino-acid sequence, 609 residues long: Autophagy-related protein 22-1 (609 aa).

The next 4 helical transmembrane spans lie at 35-55 (YGWAAEVFTVCAMGSFLPITL), 117-137 (TASFAMYTFSVSVFIQAILII), 151-171 (LLLMAFAVIGSVSTMLFLGVV), and 176-196 (MVGAVIAIIANTCFGASFVLL). Over residues 214–231 (AREPRPALDDSRAQEGHS) the composition is skewed to basic and acidic residues. The interval 214–240 (AREPRPALDDSRAQEGHSDTTNGIEHG) is disordered. Residue Asn-244 is glycosylated (N-linked (GlcNAc...) asparagine). A helical membrane pass occupies residues 287 to 307 (IGIGYIGAIILQIVCILVVIA). Asn-309 carries N-linked (GlcNAc...) asparagine glycosylation. A run of 3 helical transmembrane segments spans residues 317-337 (LVLFLIGLWWFIFSIPAALWL), 381-401 (ILLFLAAWLLLSDGIATVSGT), and 415-435 (AALGLINVIAMVAGVLGAFSW). Asn-443 carries an N-linked (GlcNAc...) asparagine glycan. Helical transmembrane passes span 450–470 (IIACILLFELVPLYGLLGFIP), 477–497 (FLGLQQPWEMFPLGIVYGLVM), 522–542 (ALYAITDKGSSIFGPTIVGII), and 552–572 (AFVFLAILIFLPLPLMLLVDV).

It belongs to the ATG22 family.

The protein resides in the vacuole membrane. Vacuolar effluxer which mediate the efflux of amino acids resulting from autophagic degradation. The release of autophagic amino acids allows the maintenance of protein synthesis and viability during nitrogen starvation. The polypeptide is Autophagy-related protein 22-1 (atg22-1) (Aspergillus fumigatus (strain ATCC MYA-4609 / CBS 101355 / FGSC A1100 / Af293) (Neosartorya fumigata)).